The primary structure comprises 86 residues: Small ribosomal subunit protein bS20 (86 aa).

The tract at residues 1-25 (MANIKSQMKRIKTNEANRQRNKAVK) is disordered.

The protein belongs to the bacterial ribosomal protein bS20 family.

Its function is as follows. Binds directly to 16S ribosomal RNA. In Saccharopolyspora erythraea (strain ATCC 11635 / DSM 40517 / JCM 4748 / NBRC 13426 / NCIMB 8594 / NRRL 2338), this protein is Small ribosomal subunit protein bS20.